The chain runs to 234 residues: Urease accessory protein UreF (234 aa).

This sequence belongs to the UreF family. As to quaternary structure, ureD, UreF and UreG form a complex that acts as a GTP-hydrolysis-dependent molecular chaperone, activating the urease apoprotein by helping to assemble the nickel containing metallocenter of UreC. The UreE protein probably delivers the nickel.

It is found in the cytoplasm. Required for maturation of urease via the functional incorporation of the urease nickel metallocenter. In Kocuria rhizophila (strain ATCC 9341 / DSM 348 / NBRC 103217 / DC2201), this protein is Urease accessory protein UreF.